The following is a 214-amino-acid chain: Orotate phosphoribosyltransferase (214 aa).

A 5-phospho-alpha-D-ribose 1-diphosphate-binding site is contributed by Lys-26. 34-35 (FF) serves as a coordination point for orotate. Residues 72-73 (YK), Arg-99, Lys-100, Lys-103, His-105, and 124-132 (DDVITAGTA) each bind 5-phospho-alpha-D-ribose 1-diphosphate. Residues Thr-128 and Arg-156 each coordinate orotate.

This sequence belongs to the purine/pyrimidine phosphoribosyltransferase family. PyrE subfamily. As to quaternary structure, homodimer. The cofactor is Mg(2+).

The enzyme catalyses orotidine 5'-phosphate + diphosphate = orotate + 5-phospho-alpha-D-ribose 1-diphosphate. It functions in the pathway pyrimidine metabolism; UMP biosynthesis via de novo pathway; UMP from orotate: step 1/2. Its function is as follows. Catalyzes the transfer of a ribosyl phosphate group from 5-phosphoribose 1-diphosphate to orotate, leading to the formation of orotidine monophosphate (OMP). This chain is Orotate phosphoribosyltransferase, found in Actinobacillus succinogenes (strain ATCC 55618 / DSM 22257 / CCUG 43843 / 130Z).